Here is a 318-residue protein sequence, read N- to C-terminus: Transcription factor MYBS3 (318 aa).

2 disordered regions span residues 1–20 (MTRR…TCPN) and 50–98 (AAGS…PWTE). The CCHC-type zinc-finger motif lies at 3 to 20 (RRCSHCSHNGHNSRTCPN). A compositionally biased stretch (polar residues) spans 8 to 18 (CSHNGHNSRTC). The span at 50–77 (AAGSTSGGASPADGPDAAPTAADGYASD) shows a compositional bias: low complexity. The region spanning 88–144 (RDRKKGVPWTEEEHRRFLLGLQKLGKGDWRGISRNFVVSRTPTQVASHAQKYFIRQS) is the HTH myb-type domain. The H-T-H motif DNA-binding region spans 116–140 (WRGISRNFVVSRTPTQVASHAQKYF). A disordered region spans residues 159–200 (VPDESMDLPPLPGGQEPETQVLNQPALPPPREEEEVDSMESD).

As to expression, expressed in all tissues, with the highest level in senescent leaves.

It is found in the nucleus. Its function is as follows. Transcription repressor that binds to 5'-TATCCA-3' elements in gene promoters. Contributes to the sugar-repressed transcription of promoters containing SRS or 5'-TATCCA-3' elements. Transcription repressor involved in a cold stress response pathway that confers cold tolerance. Suppresses the DREB1-dependent signaling pathway under prolonged cold stress. DREB1 responds quickly and transiently while MYBS3 responds slowly to cold stress. They may act sequentially and complementarily for adaptation to short- and long-term cold stress. The sequence is that of Transcription factor MYBS3 from Oryza sativa subsp. japonica (Rice).